The primary structure comprises 80 residues: Kappa-actitoxin-Avd4i (80 aa).

Positions 1–19 (MNKALFLCLVVLCAAVVFA) are cleaved as a signal peptide. A propeptide spanning residues 20-31 (AEDLQKAKHAPF) is cleaved from the precursor. 3 cysteine pairs are disulfide-bonded: Cys41-Cys76, Cys43-Cys69, and Cys59-Cys77.

The protein belongs to the sea anemone type 3 (BDS) potassium channel toxin family. As to expression, weakly expressed in the ectodermal tissue from the distal and proximal tentacles, body wall, and oral disk.

It localises to the secreted. The protein resides in the nematocyst. In terms of biological role, blocks Kv3 voltage-gated potassium channels. Reduces blood pressure. The protein is Kappa-actitoxin-Avd4i of Anemonia viridis (Snakelocks anemone).